The following is a 297-amino-acid chain: MLSSARARLPISLCSFSLPFARLPNTLSRYQETWQRLPGRTHPTRSIRTTPAYEGHIPLNWFENAVLAVGSAFMSLADPRRGDMVAALGETTAGPTLPSLRDRMLDSIEGRRVLMQRPRVNSSTIDLNKLAHYPEGTFGRAYVTWLERCGVTPDTREPVHYIDDPELAYVMQRYRECHDFYHCICNLPVNVESELALKYFEFANLGLPMTLLSALVGPVRLTPQKRQRLFAEFVPWALKCGGSSRSLITVYWEERWGQNVADMKTEFGIWDPPEARWSKPLSEAKAAAERHRTAQTH.

The transit peptide at 1 to 54 (MLSSARARLPISLCSFSLPFARLPNTLSRYQETWQRLPGRTHPTRSIRTTPAYE) directs the protein to the mitochondrion. Zn(2+) contacts are provided by H178, D179, H182, and E194.

This sequence belongs to the COQ4 family. Component of a multi-subunit COQ enzyme complex, composed of at least COQ3, COQ4, COQ5, COQ6, COQ7 and COQ9. Zn(2+) serves as cofactor.

The protein localises to the mitochondrion inner membrane. The catalysed reaction is a 4-hydroxy-3-methoxy-5-(all-trans-polyprenyl)benzoate + H(+) = a 2-methoxy-6-(all-trans-polyprenyl)phenol + CO2. It functions in the pathway cofactor biosynthesis; ubiquinone biosynthesis. Functionally, lyase that catalyzes the C1-decarboxylation of 4-hydroxy-3-methoxy-5-(all-trans-polyprenyl)benzoic acid into 2-methoxy-6-(all-trans-polyprenyl)phenol during ubiquinone biosynthesis. This is Ubiquinone biosynthesis protein COQ4, mitochondrial from Laccaria bicolor (strain S238N-H82 / ATCC MYA-4686) (Bicoloured deceiver).